The following is a 63-amino-acid chain: Large ribosomal subunit protein uL29 (63 aa).

This sequence belongs to the universal ribosomal protein uL29 family.

This is Large ribosomal subunit protein uL29 from Alteromonas mediterranea (strain DSM 17117 / CIP 110805 / LMG 28347 / Deep ecotype).